A 1325-amino-acid polypeptide reads, in one-letter code: Lysine-specific demethylase 3A (1325 aa).

Disordered regions lie at residues 249-284 (SKRI…QGHV), 300-333 (PANK…RRSV), and 372-399 (QNGK…TGLK). Over residues 274-283 (SPEVSQSQGH) the composition is skewed to polar residues. Residues 378–390 (SLISSRSSSLSDS) show a composition bias toward low complexity. The C6-type zinc finger occupies 669–694 (CDVCDTTIFNLRWVCSKCGFGVCVDC). 2 disordered regions span residues 772 to 791 (TLKE…SLQQ) and 798 to 819 (PQLP…TASV). Positions 888 to 892 (LRNLL) match the LXXLL motif motif. Residues 1062-1285 (MPSRFDDLMK…HCFWLTQEFR (224 aa)) form the JmjC domain. His1124, Asp1126, and His1253 together coordinate Fe cation.

It belongs to the JHDM2 histone demethylase family. It depends on Fe(2+) as a cofactor.

It localises to the cytoplasm. The protein localises to the nucleus. It catalyses the reaction N(6),N(6)-dimethyl-L-lysyl(9)-[histone H3] + 2 2-oxoglutarate + 2 O2 = L-lysyl(9)-[histone H3] + 2 formaldehyde + 2 succinate + 2 CO2. In terms of biological role, histone demethylase that specifically demethylates 'Lys-9' of histone H3, thereby playing a central role in histone code. Preferentially demethylates mono- and dimethylated H3 'Lys-9' residue, with a preference for dimethylated residue, while it has weak or no activity on trimethylated H3 'Lys-9'. Demethylation of Lys residue generates formaldehyde and succinate. This is Lysine-specific demethylase 3A (KDM3A) from Gallus gallus (Chicken).